The sequence spans 303 residues: tRNA pseudouridine synthase-like 1 (303 aa).

Aspartate 66 functions as the Nucleophile in the catalytic mechanism. A Phosphoserine modification is found at serine 84. Tyrosine 130 contacts substrate.

It belongs to the tRNA pseudouridine synthase TruA family.

It catalyses the reaction a uridine in tRNA = a pseudouridine in tRNA. The chain is tRNA pseudouridine synthase-like 1 (PUSL1) from Homo sapiens (Human).